Reading from the N-terminus, the 449-residue chain is Tubulin alpha-2B chain (449 aa).

Gln-11 is a binding site for GTP. Residue Lys-40 is modified to N6-acetyllysine. Positions 71, 140, 144, 145, 179, 206, and 228 each coordinate GTP. Glu-71 contacts Mg(2+). Glu-254 is a catalytic residue.

It belongs to the tubulin family. In terms of assembly, dimer of alpha and beta chains. A typical microtubule is a hollow water-filled tube with an outer diameter of 25 nm and an inner diameter of 15 nM. Alpha-beta heterodimers associate head-to-tail to form protofilaments running lengthwise along the microtubule wall with the beta-tubulin subunit facing the microtubule plus end conferring a structural polarity. Microtubules usually have 13 protofilaments but different protofilament numbers can be found in some organisms and specialized cells. Mg(2+) is required as a cofactor. Post-translationally, acetylation of alpha chains at Lys-40 stabilizes microtubules and affects affinity and processivity of microtubule motors. This modification has a role in multiple cellular functions, ranging from cell motility, cell cycle progression or cell differentiation to intracellular trafficking and signaling.

The protein resides in the cytoplasm. The protein localises to the cytoskeleton. It is found in the spindle. It localises to the nucleus. The catalysed reaction is GTP + H2O = GDP + phosphate + H(+). Functionally, tubulin is the major constituent of microtubules, a cylinder consisting of laterally associated linear protofilaments composed of alpha- and beta-tubulin heterodimers. Microtubules grow by the addition of GTP-tubulin dimers to the microtubule end, where a stabilizing cap forms. Below the cap, tubulin dimers are in GDP-bound state, owing to GTPase activity of alpha-tubulin. The polypeptide is Tubulin alpha-2B chain (ALTBE) (Physarum polycephalum (Slime mold)).